The chain runs to 299 residues: ATP synthase gamma chain (299 aa).

This sequence belongs to the ATPase gamma chain family. As to quaternary structure, F-type ATPases have 2 components, CF(1) - the catalytic core - and CF(0) - the membrane proton channel. CF(1) has five subunits: alpha(3), beta(3), gamma(1), delta(1), epsilon(1). CF(0) has three main subunits: a, b and c.

It localises to the cell membrane. In terms of biological role, produces ATP from ADP in the presence of a proton gradient across the membrane. The gamma chain is believed to be important in regulating ATPase activity and the flow of protons through the CF(0) complex. The chain is ATP synthase gamma chain from Clavibacter sepedonicus (Clavibacter michiganensis subsp. sepedonicus).